The sequence spans 291 residues: Small ribosomal subunit protein uS2 (291 aa).

Positions 270-291 (NINEEANTEFEQALSDADEDKN) are disordered.

Belongs to the universal ribosomal protein uS2 family.

This is Small ribosomal subunit protein uS2 from Rickettsia bellii (strain OSU 85-389).